Consider the following 1265-residue polypeptide: Guanine nucleotide exchange factor SDC25 (1265 aa).

The region spanning 26-97 (QPIDVVECTY…PPSFTRSILN (72 aa)) is the SH3 domain. Disordered stretches follow at residues 409 to 454 (IPAS…DTIW) and 623 to 648 (LNLD…DEYE). The segment covering 416-428 (TSCSSETSHHSPS) has biased composition (low complexity). One can recognise an N-terminal Ras-GEF domain in the interval 782–914 (SNNRIKGGSK…LLKEVNQKFK (133 aa)). In terms of domain architecture, Ras-GEF spans 952–1199 (DPVLFATQLT…YQLSLIIEPK (248 aa)). A disordered region spans residues 1201-1252 (RKKVVPNSNSNNKSQEKSRDDQTDEGKTSTKKDRFSKFQLHKTKKKAPKVSK). Positions 1214-1236 (SQEKSRDDQTDEGKTSTKKDRFS) are enriched in basic and acidic residues. Residues 1239–1252 (QLHKTKKKAPKVSK) are compositionally biased toward basic residues.

In terms of biological role, promotes the exchange of Ras-bound GDP by GTP. This Saccharomyces cerevisiae (strain AWRI1631) (Baker's yeast) protein is Guanine nucleotide exchange factor SDC25 (SDC25).